The sequence spans 150 residues: Centrin-B (150 aa).

EF-hand domains are found at residues 12-46 (DQISEIKESFDMFKSDNGKLDNDQIKYAFKALGCE), 80-114 (DSMSTLEQAFKLFVKDGSGITFKDLKKVAINIGEE), and 115-150 (CSDSDLYDMIEFADTDGDGVINKSEFISLMTTKKVL). Positions 128, 130, 132, and 139 each coordinate Ca(2+).

It belongs to the centrin family.

The protein resides in the cytoplasm. Its subcellular location is the cytoskeleton. It is found in the microtubule organizing center. It localises to the centrosome. In terms of biological role, plays a fundamental role in microtubule-organizing center structure and function. In Dictyostelium discoideum (Social amoeba), this protein is Centrin-B (cenB).